A 156-amino-acid chain; its full sequence is Arginine repressor (156 aa).

The protein belongs to the ArgR family.

It localises to the cytoplasm. The protein operates within amino-acid biosynthesis; L-arginine biosynthesis [regulation]. Functionally, regulates arginine biosynthesis genes. This is Arginine repressor from Escherichia fergusonii (strain ATCC 35469 / DSM 13698 / CCUG 18766 / IAM 14443 / JCM 21226 / LMG 7866 / NBRC 102419 / NCTC 12128 / CDC 0568-73).